The sequence spans 315 residues: Glutathione synthetase (315 aa).

The ATP-grasp domain occupies 125–310 (KLFTAWFSEF…ITGMLFDAIE (186 aa)). Residue 151–207 (HQAKGDIILKPLDGMGGTSIFRVKQDDPNLGVIIETLTQYGNQYAMAQAFIPEITKG) participates in ATP binding. Glutamate 281 and asparagine 283 together coordinate Mg(2+).

This sequence belongs to the prokaryotic GSH synthase family. Mg(2+) is required as a cofactor. It depends on Mn(2+) as a cofactor.

The catalysed reaction is gamma-L-glutamyl-L-cysteine + glycine + ATP = glutathione + ADP + phosphate + H(+). It participates in sulfur metabolism; glutathione biosynthesis; glutathione from L-cysteine and L-glutamate: step 2/2. The polypeptide is Glutathione synthetase (Shewanella oneidensis (strain ATCC 700550 / JCM 31522 / CIP 106686 / LMG 19005 / NCIMB 14063 / MR-1)).